Reading from the N-terminus, the 576-residue chain is Proline--tRNA ligase (576 aa).

The protein belongs to the class-II aminoacyl-tRNA synthetase family. ProS type 1 subfamily. Homodimer.

The protein resides in the cytoplasm. It carries out the reaction tRNA(Pro) + L-proline + ATP = L-prolyl-tRNA(Pro) + AMP + diphosphate. In terms of biological role, catalyzes the attachment of proline to tRNA(Pro) in a two-step reaction: proline is first activated by ATP to form Pro-AMP and then transferred to the acceptor end of tRNA(Pro). As ProRS can inadvertently accommodate and process non-cognate amino acids such as alanine and cysteine, to avoid such errors it has two additional distinct editing activities against alanine. One activity is designated as 'pretransfer' editing and involves the tRNA(Pro)-independent hydrolysis of activated Ala-AMP. The other activity is designated 'posttransfer' editing and involves deacylation of mischarged Ala-tRNA(Pro). The misacylated Cys-tRNA(Pro) is not edited by ProRS. The sequence is that of Proline--tRNA ligase from Leptospira borgpetersenii serovar Hardjo-bovis (strain L550).